Here is a 500-residue protein sequence, read N- to C-terminus: Lysine--tRNA ligase (500 aa).

Residues glutamate 407 and glutamate 414 each coordinate Mg(2+).

It belongs to the class-II aminoacyl-tRNA synthetase family. As to quaternary structure, homodimer. It depends on Mg(2+) as a cofactor.

The protein resides in the cytoplasm. The enzyme catalyses tRNA(Lys) + L-lysine + ATP = L-lysyl-tRNA(Lys) + AMP + diphosphate. This Azobacteroides pseudotrichonymphae genomovar. CFP2 protein is Lysine--tRNA ligase.